The primary structure comprises 370 residues: MGNVPSAVKHCLSYQQLLREHLWIGDSVAGALDPAQTSLLTNLHCFQPDVSGFSVSLAGTVACIHWETSQLSGLPEFVKIVEVGPRDGLQNEKVIVPTDIKIEFINRLSQTGLSVIEVTSFVSSRWVPQMADHTEVMKGIHQYPGVRYPVLTPNLQGFHHAVAAGATEISVFGAASESFSKKNINCSIEESMGKFEEVVKSARHMNIPARGYVSCALGCPYEGSITPQKVTEVSKRLYGMGCYEISLGDTIGVGTPGSMKRMLESVMKEIPPGALAVHCHDTYGQALANILTALQMGINVVDSAVSGLGGCPYAKGASGNVATEDLIYMLNGLGLNTGVNLYKVMEAGDFICKAVNKTTNSKVAQASFNA.

The N-myristoyl glycine moiety is linked to residue Gly2. Residues 78 to 345 form the Pyruvate carboxyltransferase domain; sequence VKIVEVGPRD…NTGVNLYKVM (268 aa). Arg86 contributes to the substrate binding site. 3 residues coordinate a divalent metal cation: Asp87, His278, and His280. The active site involves Cys311. Asn320 contributes to the a divalent metal cation binding site.

This sequence belongs to the HMG-CoA lyase family. It depends on a divalent metal cation as a cofactor.

The protein localises to the cytoplasm. It is found in the cytosol. The protein resides in the endoplasmic reticulum membrane. The catalysed reaction is (3S)-3-hydroxy-3-methylglutaryl-CoA = acetoacetate + acetyl-CoA. Its pathway is metabolic intermediate metabolism; (S)-3-hydroxy-3-methylglutaryl-CoA degradation; acetoacetate from (S)-3-hydroxy-3-methylglutaryl-CoA: step 1/1. Non-mitochondrial 3-hydroxy-3-methylglutaryl-CoA lyase that catalyzes a cation-dependent cleavage of (S)-3-hydroxy-3-methylglutaryl-CoA into acetyl-CoA and acetoacetate, a key step in ketogenesis, the products of which support energy production in nonhepatic animal tissues. The chain is 3-hydroxy-3-methylglutaryl-CoA lyase, cytoplasmic (HMGCLL1) from Homo sapiens (Human).